A 360-amino-acid polypeptide reads, in one-letter code: Nodulin-44 (360 aa).

The signal sequence occupies residues 1-23 (MEEKILMRVIVITVFLFIGAATA). 2 disordered regions span residues 123-148 (FSPR…VIPL) and 228-249 (FSPR…TLGR).

The protein belongs to the nodulin 20 family.

The chain is Nodulin-44 from Glycine max (Soybean).